We begin with the raw amino-acid sequence, 155 residues long: Large ribosomal subunit protein uL13 (155 aa).

It belongs to the universal ribosomal protein uL13 family. Part of the 50S ribosomal subunit.

Its function is as follows. This protein is one of the early assembly proteins of the 50S ribosomal subunit, although it is not seen to bind rRNA by itself. It is important during the early stages of 50S assembly. The sequence is that of Large ribosomal subunit protein uL13 from Rickettsia conorii (strain ATCC VR-613 / Malish 7).